The following is a 441-amino-acid chain: MNKSKTFGKIKKRIEEAKNKWARLSKADYSYNESARLATDALLDGGVEDYQKVLSEEGEVDLLSGDELQYILKNIKAPLYSNDNQTEGENGSAANGNKSESYYPMNSDSEPVPTLHNWSAEEKPYLKDKSSATVYFQADKTNNVRETIRRCINKTTQALAILMDEFTDAEIFCDVLEAANKRNIFVYLLLDANKLHLFIQMCEKLQVRDLHMTNISVRSVTGDVYCAKSGKKFAGQINEKFIISDWRFVLSGTYSFTWLSGQVHRNFLYKFSGDVVELFDEEFRNLYASSKPVMGLKSPAPMAPVLRREDSGMSIMSDSNPESINTTSEPFSSISTASISNDSQRPKSPVSTTPVPSPPSSPVKSPLQRVNSFHGYSSLISPPPQINYQSNYYQRNYAPDPPSFFYNNNANFYRSFRMRQEDFSMPRFNQGWRLFSRATMT.

Disordered regions lie at residues 81 to 108 (SNDNQTEGENGSAANGNKSESYYPMNSD) and 312 to 368 (GMSI…SPLQ). The segment covering 314 to 327 (SIMSDSNPESINTT) has biased composition (polar residues). A compositionally biased stretch (low complexity) spans 328-354 (SEPFSSISTASISNDSQRPKSPVSTTP).

The protein belongs to the FAM83 family.

It is found in the cytoplasm. In terms of biological role, may function in the epidermal growth factor receptor/EGFR signaling pathway. The sequence is that of Protein FAM83A from Xenopus tropicalis (Western clawed frog).